Consider the following 116-residue polypeptide: Ribonuclease P protein component (116 aa).

Belongs to the RnpA family. In terms of assembly, consists of a catalytic RNA component (M1 or rnpB) and a protein subunit.

The catalysed reaction is Endonucleolytic cleavage of RNA, removing 5'-extranucleotides from tRNA precursor.. Functionally, RNaseP catalyzes the removal of the 5'-leader sequence from pre-tRNA to produce the mature 5'-terminus. It can also cleave other RNA substrates such as 4.5S RNA. The protein component plays an auxiliary but essential role in vivo by binding to the 5'-leader sequence and broadening the substrate specificity of the ribozyme. In Carboxydothermus hydrogenoformans (strain ATCC BAA-161 / DSM 6008 / Z-2901), this protein is Ribonuclease P protein component.